A 351-amino-acid polypeptide reads, in one-letter code: Phospho-N-acetylmuramoyl-pentapeptide-transferase (351 aa).

10 consecutive transmembrane segments (helical) span residues 17-37 (TAYA…FIIL), 63-83 (IPTM…FFWI), 85-105 (LWNV…CLGF), 135-155 (ISVT…YFPF), 158-178 (SLKL…LISA), 190-210 (GLAI…AYLT), 230-250 (LVIF…FNAY), 254-274 (IMMG…TALI), 279-299 (ILFA…IIQV), and 328-348 (QVVI…LSTL).

This sequence belongs to the glycosyltransferase 4 family. MraY subfamily. It depends on Mg(2+) as a cofactor.

It localises to the cell inner membrane. The catalysed reaction is UDP-N-acetyl-alpha-D-muramoyl-L-alanyl-gamma-D-glutamyl-meso-2,6-diaminopimeloyl-D-alanyl-D-alanine + di-trans,octa-cis-undecaprenyl phosphate = di-trans,octa-cis-undecaprenyl diphospho-N-acetyl-alpha-D-muramoyl-L-alanyl-D-glutamyl-meso-2,6-diaminopimeloyl-D-alanyl-D-alanine + UMP. It functions in the pathway cell wall biogenesis; peptidoglycan biosynthesis. Catalyzes the initial step of the lipid cycle reactions in the biosynthesis of the cell wall peptidoglycan: transfers peptidoglycan precursor phospho-MurNAc-pentapeptide from UDP-MurNAc-pentapeptide onto the lipid carrier undecaprenyl phosphate, yielding undecaprenyl-pyrophosphoryl-MurNAc-pentapeptide, known as lipid I. The protein is Phospho-N-acetylmuramoyl-pentapeptide-transferase of Borrelia hermsii (strain HS1 / DAH).